A 127-amino-acid polypeptide reads, in one-letter code: Small ribosomal subunit protein uS13 (127 aa).

Residues 95 to 118 (GLPVRGQRTHTNARTRKGPKKGLV) show a composition bias toward basic residues. The disordered stretch occupies residues 95 to 127 (GLPVRGQRTHTNARTRKGPKKGLVRKAAAPAPK).

It belongs to the universal ribosomal protein uS13 family. In terms of assembly, part of the 30S ribosomal subunit. Forms a loose heterodimer with protein S19. Forms two bridges to the 50S subunit in the 70S ribosome.

Functionally, located at the top of the head of the 30S subunit, it contacts several helices of the 16S rRNA. In the 70S ribosome it contacts the 23S rRNA (bridge B1a) and protein L5 of the 50S subunit (bridge B1b), connecting the 2 subunits; these bridges are implicated in subunit movement. Contacts the tRNAs in the A and P-sites. This Anaeromyxobacter sp. (strain Fw109-5) protein is Small ribosomal subunit protein uS13.